Reading from the N-terminus, the 216-residue chain is Ribonuclease HII (216 aa).

The RNase H type-2 domain occupies 33–216 (WPVAGADEAG…RMSFRPFRQV (184 aa)). The a divalent metal cation site is built by Asp39, Glu40, and Asp130.

The protein belongs to the RNase HII family. Requires Mn(2+) as cofactor. Mg(2+) serves as cofactor.

It localises to the cytoplasm. It carries out the reaction Endonucleolytic cleavage to 5'-phosphomonoester.. Functionally, endonuclease that specifically degrades the RNA of RNA-DNA hybrids. The sequence is that of Ribonuclease HII from Rhizobium meliloti (strain 1021) (Ensifer meliloti).